The following is a 315-amino-acid chain: Methylglutaconyl-CoA hydratase, mitochondrial (315 aa).

Residues 1–43 (MAAAAAPGALGALSAGRVRLVAACCARLGSAAWARGTAPRRGY) constitute a mitochondrion transit peptide. Residue K76 is modified to N6-acetyllysine; alternate. K76 bears the N6-succinyllysine; alternate mark. The tract at residues 81 to 95 (KNLLKMLSKAVDALK) is RNA-binding. K85 is modified (N6-succinyllysine). N6-acetyllysine; alternate occurs at positions 89 and 120. N6-succinyllysine; alternate occurs at positions 89 and 120. 2 positions are modified to N6-succinyllysine: K124 and K136. N6-acetyllysine; alternate is present on residues K180 and K187. An N6-succinyllysine; alternate mark is found at K180 and K187. At K305 the chain carries N6-succinyllysine.

It belongs to the enoyl-CoA hydratase/isomerase family. As to quaternary structure, homohexamer.

Its subcellular location is the mitochondrion. The enzyme catalyses (3S)-3-hydroxy-3-methylglutaryl-CoA = 3-methyl-(2E)-glutaconyl-CoA + H2O. It carries out the reaction (3S)-citramalyl-CoA = itaconyl-CoA + H2O. It catalyses the reaction 3-hydroxyisovaleryl-CoA = 3-methylbut-2-enoyl-CoA + H2O. The catalysed reaction is (S)-3-hydroxyglutaryl-CoA = (2E)-glutaconyl-CoA + H2O. It participates in amino-acid degradation; L-leucine degradation; (S)-3-hydroxy-3-methylglutaryl-CoA from 3-isovaleryl-CoA: step 3/3. Functionally, catalyzes the fifth step in the leucine degradation pathway, the reversible hydration of 3-methylglutaconyl-CoA (3-MG-CoA) to 3-hydroxy-3-methylglutaryl-CoA (HMG-CoA). Can catalyze the reverse reaction but at a much lower rate in vitro. HMG-CoA is then quickly degraded by another enzyme (such as HMG-CoA lyase) to give acetyl-CoA and acetoacetate. Uses other substrates such as (2E)-glutaconyl-CoA efficiently in vitro, and to a lesser extent 3-methylcrotonyl-CoA (3-methyl-(2E)-butenoyl-CoA), crotonyl-CoA ((2E)-butenoyl-CoA) and 3-hydroxybutanoyl-CoA (the missing carboxylate reduces affinity to the active site). Originally it was identified as an RNA-binding protein as it binds to AU-rich elements (AREs) in vitro. AREs direct rapid RNA degradation and mRNA deadenylation. Might have itaconyl-CoA hydratase activity, converting itaconyl-CoA into citramalyl-CoA in the C5-dicarboxylate catabolism pathway. The C5-dicarboxylate catabolism pathway is required to detoxify itaconate, an antimicrobial metabolite and immunomodulator produced by macrophages during certain infections, that can act as a vitamin B12-poisoning metabolite. This Rattus norvegicus (Rat) protein is Methylglutaconyl-CoA hydratase, mitochondrial.